Here is a 422-residue protein sequence, read N- to C-terminus: 5-hydroxytryptamine receptor 1A (422 aa).

The tract at residues 1–23 (MDVLSPGQGNNTTSPPAPFETGG) is disordered. At 1 to 38 (MDVLSPGQGNNTTSPPAPFETGGNTTGISDVTFSYQVI) the chain is on the extracellular side. 3 N-linked (GlcNAc...) asparagine glycosylation sites follow: asparagine 10, asparagine 11, and asparagine 24. A helical membrane pass occupies residues 39–59 (TSLLLGTLIFCAVLGNACVVA). Topologically, residues 60-73 (AIALERSLQNVANY) are cytoplasmic. The chain crosses the membrane as a helical span at residues 74 to 98 (LIGSLAVTDLMVSVLVLPMAALYQV). The Extracellular portion of the chain corresponds to 99–107 (LNKWTLGQV). The helical transmembrane segment at 108-132 (TCDLFIALDVLCCTSSILHLCAIAL) threads the bilayer. Cysteine 109 and cysteine 187 are oxidised to a cystine. Aspartate 116 and cysteine 120 together coordinate serotonin. The short motif at 133–135 (DRY) is the DRY motif; important for ligand-induced conformation changes element. Residues 133 to 152 (DRYWAITDPIDYVNKRTPRR) are Cytoplasmic-facing. Residues 153–174 (AAALISLTWLIGFLISIPPMLG) traverse the membrane as a helical segment. Residues 175-193 (WRTPEDRSDPDACTISKDH) lie on the Extracellular side of the membrane. A helical transmembrane segment spans residues 194 to 216 (GYTIYSTFGAFYIPLLLMLVLYG). Topologically, residues 217-346 (RIFRAARFRI…LARERKTVKT (130 aa)) are cytoplasmic. A disordered region spans residues 235–262 (KTGADTRHGASPAPQPKKSVNGESGSRN). 1D-myo-inositol 4-phosphate-binding residues include threonine 314, lysine 345, threonine 346, and glycine 352. A helical transmembrane segment spans residues 347–370 (LGIIMGTFILCWLPFFIVALVLPF). At 371–378 (CESSCHMP) the chain is on the extracellular side. The chain crosses the membrane as a helical span at residues 379 to 403 (TLLGAIINWLGYSNSLLNPVIYAYF). Positions 396 to 400 (NPVIY) match the NPxxY motif; important for ligand-induced conformation changes and signaling motif. Residues phenylalanine 403, asparagine 404, and lysine 405 each coordinate 1D-myo-inositol 4-phosphate. Over 404–422 (NKDFQNAFKKIIKCKFCRQ) the chain is Cytoplasmic.

It belongs to the G-protein coupled receptor 1 family. 5-hydroxytryptamine receptor subfamily. HTR1A sub-subfamily. As to quaternary structure, heterodimer; heterodimerizes with GPER1. Interacts with YIF1B. Interacts with GPR39 and GALR1.

Its subcellular location is the cell membrane. The protein resides in the cell projection. It is found in the dendrite. G-protein coupled receptor activity is regulated by lipids: phosphatidylinositol 4-phosphate increases HTR1A-mediated activity. Functionally, G-protein coupled receptor for 5-hydroxytryptamine (serotonin). Also functions as a receptor for various drugs and psychoactive substances. Ligand binding causes a conformation change that triggers signaling via guanine nucleotide-binding proteins (G proteins) and modulates the activity of downstream effectors, such as adenylate cyclase. HTR1A is coupled to G(i)/G(o) G alpha proteins and mediates inhibitory neurotransmission: signaling inhibits adenylate cyclase activity and activates a phosphatidylinositol-calcium second messenger system that regulates the release of Ca(2+) ions from intracellular stores. Beta-arrestin family members regulate signaling by mediating both receptor desensitization and resensitization processes. The sequence is that of 5-hydroxytryptamine receptor 1A (HTR1A) from Gorilla gorilla gorilla (Western lowland gorilla).